A 234-amino-acid polypeptide reads, in one-letter code: Large ribosomal subunit protein uL1 (234 aa).

This sequence belongs to the universal ribosomal protein uL1 family. As to quaternary structure, part of the 50S ribosomal subunit.

Binds directly to 23S rRNA. The L1 stalk is quite mobile in the ribosome, and is involved in E site tRNA release. In terms of biological role, protein L1 is also a translational repressor protein, it controls the translation of the L11 operon by binding to its mRNA. The polypeptide is Large ribosomal subunit protein uL1 (Klebsiella pneumoniae subsp. pneumoniae (strain ATCC 700721 / MGH 78578)).